A 388-amino-acid polypeptide reads, in one-letter code: Lipoyl synthase, mitochondrial (388 aa).

Residues 1–18 constitute a mitochondrion transit peptide; that stretch reads MRLTTVQRRFLVSTKAKV. A compositionally biased stretch (low complexity) spans 22 to 39; the sequence is SISSTANTGSASAGAPNG. Residues 22-43 are disordered; that stretch reads SISSTANTGSASAGAPNGQTRR. Positions 120, 125, 131, 151, 155, 158, and 366 each coordinate [4Fe-4S] cluster. In terms of domain architecture, Radical SAM core spans 134-355; it reads GKDKSKATAT…KDKAKEMGFL (222 aa).

It belongs to the radical SAM superfamily. Lipoyl synthase family. Requires [4Fe-4S] cluster as cofactor.

It is found in the mitochondrion. The enzyme catalyses [[Fe-S] cluster scaffold protein carrying a second [4Fe-4S](2+) cluster] + N(6)-octanoyl-L-lysyl-[protein] + 2 oxidized [2Fe-2S]-[ferredoxin] + 2 S-adenosyl-L-methionine + 4 H(+) = [[Fe-S] cluster scaffold protein] + N(6)-[(R)-dihydrolipoyl]-L-lysyl-[protein] + 4 Fe(3+) + 2 hydrogen sulfide + 2 5'-deoxyadenosine + 2 L-methionine + 2 reduced [2Fe-2S]-[ferredoxin]. It functions in the pathway protein modification; protein lipoylation via endogenous pathway; protein N(6)-(lipoyl)lysine from octanoyl-[acyl-carrier-protein]: step 2/2. Functionally, catalyzes the radical-mediated insertion of two sulfur atoms into the C-6 and C-8 positions of the octanoyl moiety bound to the lipoyl domains of lipoate-dependent enzymes, thereby converting the octanoylated domains into lipoylated derivatives. This Candida glabrata (strain ATCC 2001 / BCRC 20586 / JCM 3761 / NBRC 0622 / NRRL Y-65 / CBS 138) (Yeast) protein is Lipoyl synthase, mitochondrial.